Here is a 567-residue protein sequence, read N- to C-terminus: Oxygen-dependent choline dehydrogenase (567 aa).

Position 6 to 35 (6 to 35) interacts with FAD; sequence DYIIVGAGSAGNTLATRLTEDEGVTVLLLE. His475 acts as the Proton acceptor in catalysis.

Belongs to the GMC oxidoreductase family. The cofactor is FAD.

It catalyses the reaction choline + A = betaine aldehyde + AH2. The enzyme catalyses betaine aldehyde + NAD(+) + H2O = glycine betaine + NADH + 2 H(+). It participates in amine and polyamine biosynthesis; betaine biosynthesis via choline pathway; betaine aldehyde from choline (cytochrome c reductase route): step 1/1. Involved in the biosynthesis of the osmoprotectant glycine betaine. Catalyzes the oxidation of choline to betaine aldehyde and betaine aldehyde to glycine betaine at the same rate. The polypeptide is Oxygen-dependent choline dehydrogenase (Pseudomonas fluorescens (strain SBW25)).